Consider the following 576-residue polypeptide: Arginine--tRNA ligase (576 aa).

Positions 122 to 132 (PNVAKEMHVGH) match the 'HIGH' region motif.

It belongs to the class-I aminoacyl-tRNA synthetase family. In terms of assembly, monomer.

It is found in the cytoplasm. It catalyses the reaction tRNA(Arg) + L-arginine + ATP = L-arginyl-tRNA(Arg) + AMP + diphosphate. In Hamiltonella defensa subsp. Acyrthosiphon pisum (strain 5AT), this protein is Arginine--tRNA ligase.